Consider the following 124-residue polypeptide: UPF0235 protein (124 aa).

Residues 1 to 22 form a disordered region; the sequence is MTKKGSSNSSKQQQQQQQIIIN.

It belongs to the UPF0235 family.

This chain is UPF0235 protein, found in Dictyostelium discoideum (Social amoeba).